A 594-amino-acid polypeptide reads, in one-letter code: Choline dehydrogenase, mitochondrial (594 aa).

A mitochondrion-targeting transit peptide spans 1–29 (MWCLLRGLGRPGALARGALGQQQSLGARA). 42 to 71 (SYVVVGAGSAGCVLAGRLTEDPAERVLLLE) provides a ligand contact to FAD. K436 is subject to N6-succinyllysine. Residues K484 and K496 each carry the N6-acetyllysine; alternate modification. Residues K484 and K496 each carry the N6-succinyllysine; alternate modification. H511 acts as the Proton acceptor in catalysis. An N6-acetyllysine modification is found at K580.

The protein belongs to the GMC oxidoreductase family. FAD serves as cofactor.

It is found in the mitochondrion inner membrane. The enzyme catalyses choline + A = betaine aldehyde + AH2. Its pathway is amine and polyamine biosynthesis; betaine biosynthesis via choline pathway; betaine aldehyde from choline (cytochrome c reductase route): step 1/1. The sequence is that of Choline dehydrogenase, mitochondrial (CHDH) from Homo sapiens (Human).